Reading from the N-terminus, the 558-residue chain is Serine/threonine-protein phosphatase 2B catalytic subunit (558 aa).

D128, H130, and D156 together coordinate Fe cation. Zn(2+) contacts are provided by D156 and N188. Catalysis depends on H189, which acts as the Proton donor. Positions 237 and 319 each coordinate Zn(2+). Disordered stretches follow at residues 415–439 (LRED…NQDP) and 534–558 (ALER…LSTS). Residues 420–435 (ATTSPGSASPALPSAA) show a composition bias toward low complexity. Basic and acidic residues predominate over residues 534 to 548 (ALERATREADNDKKL). Polar residues predominate over residues 549-558 (QTLSRRLSTS).

The protein belongs to the PPP phosphatase family. PP-2B subfamily. In terms of assembly, composed of two components (A and B), the A component is the catalytic subunit and the B component confers calcium sensitivity. Requires Fe(3+) as cofactor. Zn(2+) is required as a cofactor.

The enzyme catalyses O-phospho-L-seryl-[protein] + H2O = L-seryl-[protein] + phosphate. It catalyses the reaction O-phospho-L-threonyl-[protein] + H2O = L-threonyl-[protein] + phosphate. Calcium-dependent, calmodulin-stimulated protein phosphatase. This subunit may have a role in the calmodulin activation of calcineurin. The polypeptide is Serine/threonine-protein phosphatase 2B catalytic subunit (cna-1) (Neurospora crassa (strain ATCC 24698 / 74-OR23-1A / CBS 708.71 / DSM 1257 / FGSC 987)).